We begin with the raw amino-acid sequence, 226 residues long: MKPFLNDSWWAVMKSEFEQPYYQELREWMKEEYRTQTVFPKPDDVYRALHLTSYEEVKVVILGQDPYHGPGQAHGLSFSVQPGVKHPPSLRNIFQELKDDLGCPVPNHGSLVSWAEQGVLLLNTVLTVRKGEANSHKGKGWERVTDRVIDALNERDQPVVFVLWGRHAQNKKERIDQNKHYIIESPHPSPFSARNGFFGSRPFSKVNAYLKQMGTEEINWCIQDIE.

Asp-65 acts as the Proton acceptor in catalysis.

This sequence belongs to the uracil-DNA glycosylase (UDG) superfamily. UNG family.

The protein resides in the cytoplasm. The catalysed reaction is Hydrolyzes single-stranded DNA or mismatched double-stranded DNA and polynucleotides, releasing free uracil.. In terms of biological role, excises uracil residues from the DNA which can arise as a result of misincorporation of dUMP residues by DNA polymerase or due to deamination of cytosine. The chain is Uracil-DNA glycosylase from Bacillus pumilus (strain SAFR-032).